Here is a 154-residue protein sequence, read N- to C-terminus: Putative ankyrin repeat protein RBE_1220 (154 aa).

ANK repeat units lie at residues 78–108 and 113–142; these read EKVN…NVDQ and NSRT…ILIL.

This Rickettsia bellii (strain RML369-C) protein is Putative ankyrin repeat protein RBE_1220.